We begin with the raw amino-acid sequence, 277 residues long: Putative phosphoenolpyruvate synthase regulatory protein (277 aa).

Gly157–Thr164 is a binding site for ADP.

It belongs to the pyruvate, phosphate/water dikinase regulatory protein family. PSRP subfamily.

The catalysed reaction is [pyruvate, water dikinase] + ADP = [pyruvate, water dikinase]-phosphate + AMP + H(+). It carries out the reaction [pyruvate, water dikinase]-phosphate + phosphate + H(+) = [pyruvate, water dikinase] + diphosphate. Bifunctional serine/threonine kinase and phosphorylase involved in the regulation of the phosphoenolpyruvate synthase (PEPS) by catalyzing its phosphorylation/dephosphorylation. The chain is Putative phosphoenolpyruvate synthase regulatory protein from Aromatoleum aromaticum (strain DSM 19018 / LMG 30748 / EbN1) (Azoarcus sp. (strain EbN1)).